We begin with the raw amino-acid sequence, 188 residues long: Elongation factor P (188 aa).

The residue at position 34 (Lys-34) is an N6-(3,6-diaminohexanoyl)-5-hydroxylysine.

It belongs to the elongation factor P family. In terms of processing, may be beta-lysylated on the epsilon-amino group of Lys-34 by the combined action of EpmA and EpmB, and then hydroxylated on the C5 position of the same residue by EpmC (if this protein is present). Lysylation is critical for the stimulatory effect of EF-P on peptide-bond formation. The lysylation moiety may extend toward the peptidyltransferase center and stabilize the terminal 3-CCA end of the tRNA. Hydroxylation of the C5 position on Lys-34 may allow additional potential stabilizing hydrogen-bond interactions with the P-tRNA.

It is found in the cytoplasm. The protein operates within protein biosynthesis; polypeptide chain elongation. Its function is as follows. Involved in peptide bond synthesis. Alleviates ribosome stalling that occurs when 3 or more consecutive Pro residues or the sequence PPG is present in a protein, possibly by augmenting the peptidyl transferase activity of the ribosome. Modification of Lys-34 is required for alleviation. The chain is Elongation factor P from Serratia proteamaculans (strain 568).